The following is a 428-amino-acid chain: 3-phosphoshikimate 1-carboxyvinyltransferase (428 aa).

Lys-23, Ser-24, and Arg-28 together coordinate 3-phosphoshikimate. Lys-23 lines the phosphoenolpyruvate pocket. Phosphoenolpyruvate-binding residues include Gly-97 and Arg-125. Residues Ser-170, Ser-171, Gln-172, Ser-198, Asp-314, Asn-337, and Lys-341 each coordinate 3-phosphoshikimate. Gln-172 serves as a coordination point for phosphoenolpyruvate. Catalysis depends on Asp-314, which acts as the Proton acceptor. Phosphoenolpyruvate is bound by residues Arg-345, Arg-387, and Lys-412.

This sequence belongs to the EPSP synthase family. In terms of assembly, monomer.

The protein localises to the cytoplasm. The enzyme catalyses 3-phosphoshikimate + phosphoenolpyruvate = 5-O-(1-carboxyvinyl)-3-phosphoshikimate + phosphate. Its pathway is metabolic intermediate biosynthesis; chorismate biosynthesis; chorismate from D-erythrose 4-phosphate and phosphoenolpyruvate: step 6/7. Catalyzes the transfer of the enolpyruvyl moiety of phosphoenolpyruvate (PEP) to the 5-hydroxyl of shikimate-3-phosphate (S3P) to produce enolpyruvyl shikimate-3-phosphate and inorganic phosphate. In Serratia proteamaculans (strain 568), this protein is 3-phosphoshikimate 1-carboxyvinyltransferase.